A 150-amino-acid polypeptide reads, in one-letter code: Phosphoribosyl-AMP cyclohydrolase (150 aa).

Asp-92 provides a ligand contact to Mg(2+). Cys-93 is a binding site for Zn(2+). Mg(2+) contacts are provided by Asp-94 and Asp-96. Cys-111 and Cys-118 together coordinate Zn(2+).

Belongs to the PRA-CH family. In terms of assembly, homodimer. It depends on Mg(2+) as a cofactor. Zn(2+) serves as cofactor.

It localises to the cytoplasm. It carries out the reaction 1-(5-phospho-beta-D-ribosyl)-5'-AMP + H2O = 1-(5-phospho-beta-D-ribosyl)-5-[(5-phospho-beta-D-ribosylamino)methylideneamino]imidazole-4-carboxamide. The protein operates within amino-acid biosynthesis; L-histidine biosynthesis; L-histidine from 5-phospho-alpha-D-ribose 1-diphosphate: step 3/9. Its function is as follows. Catalyzes the hydrolysis of the adenine ring of phosphoribosyl-AMP. The polypeptide is Phosphoribosyl-AMP cyclohydrolase (Agrobacterium fabrum (strain C58 / ATCC 33970) (Agrobacterium tumefaciens (strain C58))).